The chain runs to 86 residues: U-actitoxin-Avd10a (86 aa).

Positions 1–20 (MSRIAILLFVAFLLVAGISA) are cleaved as a signal peptide. Residues 21–42 (KSTAHFKKNVLADLFKERRFNA) constitute a propeptide that is removed on maturation. In terms of domain architecture, ShKT spans 51–86 (CVNIDVDSFCDGMAERGACNIIPQMATNCAKACNSC). Intrachain disulfides connect C51/C86, C60/C79, and C69/C83.

Belongs to the sea anemone type 1 potassium channel toxin family. Type 1b subfamily.

It is found in the secreted. The protein resides in the nematocyst. In terms of biological role, inhibits voltage-gated potassium channels (Kv1/KCNA). The sequence is that of U-actitoxin-Avd10a from Anemonia viridis (Snakelocks anemone).